We begin with the raw amino-acid sequence, 294 residues long: 33 kDa chaperonin (294 aa).

Disulfide bonds link Cys-238–Cys-240 and Cys-271–Cys-274.

Belongs to the HSP33 family. In terms of processing, under oxidizing conditions two disulfide bonds are formed involving the reactive cysteines. Under reducing conditions zinc is bound to the reactive cysteines and the protein is inactive.

The protein localises to the cytoplasm. Functionally, redox regulated molecular chaperone. Protects both thermally unfolding and oxidatively damaged proteins from irreversible aggregation. Plays an important role in the bacterial defense system toward oxidative stress. The polypeptide is 33 kDa chaperonin (Staphylococcus haemolyticus (strain JCSC1435)).